Reading from the N-terminus, the 176-residue chain is N-alpha-acetyltransferase NAT5 (176 aa).

Residues 14–176 (NNLGMLTKLA…DAILLKKHIS (163 aa)) form the N-acetyltransferase domain.

Belongs to the acetyltransferase family. Component of the N-terminal acetyltransferase A (NatA) complex, which is composed of ARD1, NAT1 and NAT5.

The protein resides in the cytoplasm. It carries out the reaction N-terminal L-methionyl-L-alanyl-[protein] + acetyl-CoA = N-terminal N(alpha)-acetyl-L-methionyl-L-alanyl-[protein] + CoA + H(+). It catalyses the reaction N-terminal L-methionyl-L-seryl-[protein] + acetyl-CoA = N-terminal N(alpha)-acetyl-L-methionyl-L-seryl-[protein] + CoA + H(+). The catalysed reaction is N-terminal L-methionyl-L-valyl-[protein] + acetyl-CoA = N-terminal N(alpha)-acetyl-L-methionyl-L-valyl-[protein] + CoA + H(+). The enzyme catalyses N-terminal L-methionyl-L-threonyl-[protein] + acetyl-CoA = N-terminal N(alpha)-acetyl-L-methionyl-L-threonyl-[protein] + CoA + H(+). It carries out the reaction N-terminal L-methionyl-L-lysyl-[protein] + acetyl-CoA = N-terminal N(alpha)-acetyl-L-methionyl-L-lysyl-[protein] + CoA + H(+). It catalyses the reaction N-terminal L-methionyl-L-leucyl-[protein] + acetyl-CoA = N-terminal N(alpha)-acetyl-L-methionyl-L-leucyl-[protein] + CoA + H(+). The catalysed reaction is N-terminal L-methionyl-L-phenylalanyl-[protein] + acetyl-CoA = N-terminal N(alpha)-acetyl-L-methionyl-L-phenylalanyl-[protein] + CoA + H(+). The enzyme catalyses N-terminal L-methionyl-L-tyrosyl-[protein] + acetyl-CoA = N-terminal N(alpha)-acetyl-L-methionyl-L-tyrosyl-[protein] + CoA + H(+). Its function is as follows. N-alpha-acetyltransferase that acetylates the N-terminus of proteins that retain their initiating methionine. Has a broad substrate specificity: able to acetylate the initiator methionine of most peptides. Non-essential component of the NatA N-terminal acetyltransferase. The polypeptide is N-alpha-acetyltransferase NAT5 (Saccharomyces cerevisiae (strain ATCC 204508 / S288c) (Baker's yeast)).